The primary structure comprises 41 residues: Hadrurin (41 aa).

The protein belongs to the non-disulfide-bridged peptide (NDBP) superfamily. Long chain multifunctional peptide (group 2) family. Expressed by the venom gland.

Its subcellular location is the secreted. Functionally, antimicrobial activity against S.typhimurium, K.pneumoniae, E.cloacae, P.aeruginosa, E.coli and S.marcescens. Also shows hemolytic activity when tested in human erythrocytes. The protein is Hadrurin of Hoffmannihadrurus aztecus (Mexican scorpion).